Consider the following 366-residue polypeptide: tRNA (guanine(26)-N(2))-dimethyltransferase (366 aa).

The segment at 1-28 (MEVSEGSVTVEVPEERHGASEGSGEGVF) is disordered. Positions 1 to 365 (MEVSEGSVTV…ADVADIRNAV (365 aa)) constitute a Trm1 methyltransferase domain. 3 residues coordinate S-adenosyl-L-methionine: R37, R64, and D79. Residues C234, C237, C254, and C257 each coordinate Zn(2+).

The protein belongs to the class I-like SAM-binding methyltransferase superfamily. Trm1 family.

The catalysed reaction is guanosine(26) in tRNA + 2 S-adenosyl-L-methionine = N(2)-dimethylguanosine(26) in tRNA + 2 S-adenosyl-L-homocysteine + 2 H(+). Dimethylates a single guanine residue at position 26 of a number of tRNAs using S-adenosyl-L-methionine as donor of the methyl groups. The sequence is that of tRNA (guanine(26)-N(2))-dimethyltransferase from Natronomonas pharaonis (strain ATCC 35678 / DSM 2160 / CIP 103997 / JCM 8858 / NBRC 14720 / NCIMB 2260 / Gabara) (Halobacterium pharaonis).